We begin with the raw amino-acid sequence, 156 residues long: Small ribosomal subunit protein uS7 (156 aa).

This sequence belongs to the universal ribosomal protein uS7 family. As to quaternary structure, part of the 30S ribosomal subunit. Contacts proteins S9 and S11.

Functionally, one of the primary rRNA binding proteins, it binds directly to 16S rRNA where it nucleates assembly of the head domain of the 30S subunit. Is located at the subunit interface close to the decoding center, probably blocks exit of the E-site tRNA. In Alkalilimnicola ehrlichii (strain ATCC BAA-1101 / DSM 17681 / MLHE-1), this protein is Small ribosomal subunit protein uS7.